The primary structure comprises 1167 residues: Carbamoyl phosphate synthase large chain (1167 aa).

The carboxyphosphate synthetic domain stretch occupies residues 1 to 455 (MPRRTDIKSI…SLQKALRGLE (455 aa)). ATP-binding residues include arginine 129, arginine 221, glycine 227, glycine 228, glutamate 260, valine 262, glutamate 267, glycine 293, valine 294, histidine 295, glutamine 337, and glutamate 351. The ATP-grasp 1 domain maps to 184 to 380 (LETRWNLGEG…IAKIAAKLAV (197 aa)). Residues glutamine 337, glutamate 351, and asparagine 353 each coordinate Mg(2+). 3 residues coordinate Mn(2+): glutamine 337, glutamate 351, and asparagine 353. Residues 456–619 (TGLTGLDEIE…PFAGALANEA (164 aa)) form an oligomerization domain region. The segment at 620 to 1031 (QVSSRKKVVI…AFAKSQLGAG (412 aa)) is carbamoyl phosphate synthetic domain. Residues 748–960 (QKLLHKLGLS…IAKIAARIMA (213 aa)) form the ATP-grasp 2 domain. Positions 784, 844, 846, 851, 876, 877, 878, 879, 919, and 931 each coordinate ATP. Residues glutamine 919, glutamate 931, and asparagine 933 each contribute to the Mg(2+) site. Glutamine 919, glutamate 931, and asparagine 933 together coordinate Mn(2+). Positions 1032 to 1167 (VDLPRSGTLF…EVRPLQEYFA (136 aa)) constitute an MGS-like domain. Residues 1032-1167 (VDLPRSGTLF…EVRPLQEYFA (136 aa)) form an allosteric domain region.

This sequence belongs to the CarB family. As to quaternary structure, composed of two chains; the small (or glutamine) chain promotes the hydrolysis of glutamine to ammonia, which is used by the large (or ammonia) chain to synthesize carbamoyl phosphate. Tetramer of heterodimers (alpha,beta)4. It depends on Mg(2+) as a cofactor. Mn(2+) serves as cofactor.

The enzyme catalyses hydrogencarbonate + L-glutamine + 2 ATP + H2O = carbamoyl phosphate + L-glutamate + 2 ADP + phosphate + 2 H(+). It catalyses the reaction hydrogencarbonate + NH4(+) + 2 ATP = carbamoyl phosphate + 2 ADP + phosphate + 2 H(+). Its pathway is amino-acid biosynthesis; L-arginine biosynthesis; carbamoyl phosphate from bicarbonate: step 1/1. The protein operates within pyrimidine metabolism; UMP biosynthesis via de novo pathway; (S)-dihydroorotate from bicarbonate: step 1/3. In terms of biological role, large subunit of the glutamine-dependent carbamoyl phosphate synthetase (CPSase). CPSase catalyzes the formation of carbamoyl phosphate from the ammonia moiety of glutamine, carbonate, and phosphate donated by ATP, constituting the first step of 2 biosynthetic pathways, one leading to arginine and/or urea and the other to pyrimidine nucleotides. The large subunit (synthetase) binds the substrates ammonia (free or transferred from glutamine from the small subunit), hydrogencarbonate and ATP and carries out an ATP-coupled ligase reaction, activating hydrogencarbonate by forming carboxy phosphate which reacts with ammonia to form carbamoyl phosphate. The chain is Carbamoyl phosphate synthase large chain from Mesorhizobium japonicum (strain LMG 29417 / CECT 9101 / MAFF 303099) (Mesorhizobium loti (strain MAFF 303099)).